The primary structure comprises 498 residues: Cobyric acid synthase (498 aa).

The GATase cobBQ-type domain occupies Asp-257 to Trp-447. Cys-338 acts as the Nucleophile in catalysis. His-439 is a catalytic residue.

Belongs to the CobB/CobQ family. CobQ subfamily.

It functions in the pathway cofactor biosynthesis; adenosylcobalamin biosynthesis. Functionally, catalyzes amidations at positions B, D, E, and G on adenosylcobyrinic A,C-diamide. NH(2) groups are provided by glutamine, and one molecule of ATP is hydrogenolyzed for each amidation. This chain is Cobyric acid synthase, found in Synechococcus sp. (strain CC9605).